Here is a 1462-residue protein sequence, read N- to C-terminus: Tyrosine-protein phosphatase 69D (1462 aa).

The N-terminal stretch at 1 to 28 is a signal peptide; it reads MALLYRRMSMLLNIILAYIFLCAICVQG. 2 Ig-like C2-type domains span residues 29 to 125 and 131 to 230; these read SVKQ…TEFQ and PSKV…KEIT. Topologically, residues 29–805 are extracellular; sequence SVKQEWAEIG…MDYYLSIGVK (777 aa). 20 N-linked (GlcNAc...) asparagine glycosylation sites follow: N40, N58, N64, N85, N109, N119, N162, N191, N196, N209, N255, N288, N302, N429, N442, N451, N516, N613, N701, and N755. The cysteines at positions 45 and 112 are disulfide-linked. A disulfide bridge links C154 with C214. 3 Fibronectin type-III domains span residues 237–332, 334–435, and 439–547; these read PQVS…TLSY, PIFI…TMDG, and KPTN…TPDA. A helical membrane pass occupies residues 806–823; that stretch reads AGAVLLGVILVFIVLWVF. Residues 824-1462 are Cytoplasmic-facing; it reads HHKKTKNELQ…LHHIAESTLD (639 aa). 2 consecutive Tyrosine-protein phosphatase domains span residues 893–1156 and 1187–1450; these read FLRE…LLDT and LEVE…IINY. Residues C1097 and C1391 each act as phosphocysteine intermediate in the active site.

Belongs to the protein-tyrosine phosphatase family. Receptor class subfamily.

It localises to the membrane. It carries out the reaction O-phospho-L-tyrosyl-[protein] + H2O = L-tyrosyl-[protein] + phosphate. In terms of biological role, possible cell adhesion receptor. This chain is Tyrosine-protein phosphatase 69D (Ptp69D), found in Drosophila melanogaster (Fruit fly).